The primary structure comprises 55 residues: uncharacterized protein (55 aa).

This is an uncharacterized protein from Saccharomyces cerevisiae (strain ATCC 204508 / S288c) (Baker's yeast).